The sequence spans 734 residues: Photosystem I P700 chlorophyll a apoprotein A2 (734 aa).

The next 8 helical transmembrane spans lie at 46 to 69, 135 to 158, 175 to 199, 273 to 291, 330 to 353, 369 to 395, 417 to 439, and 517 to 535; these read IFAS…FHVA, LYTG…LHLQ, LNHH…HVAI, IAHH…GHMY, IHFQ…QHMY, AALY…IFFI, AIIS…LYVH, and FLVH…LILV. Residues cysteine 559 and cysteine 568 each coordinate [4Fe-4S] cluster. 2 consecutive transmembrane segments (helical) span residues 575–596 and 643–665; these read AFYL…YWHW and LSVW…MFLI. Residues histidine 654, methionine 662, and tyrosine 670 each coordinate chlorophyll a. A phylloquinone-binding site is contributed by tryptophan 671. Residues 707-727 traverse the membrane as a helical segment; it reads LVGLAHFSVGYIFTYAAFLIA.

It belongs to the PsaA/PsaB family. As to quaternary structure, the PsaA/B heterodimer binds the P700 chlorophyll special pair and subsequent electron acceptors. PSI consists of a core antenna complex that captures photons, and an electron transfer chain that converts photonic excitation into a charge separation. The eukaryotic PSI reaction center is composed of at least 11 subunits. P700 is a chlorophyll a/chlorophyll a' dimer, A0 is one or more chlorophyll a, A1 is one or both phylloquinones and FX is a shared 4Fe-4S iron-sulfur center. serves as cofactor.

It localises to the plastid. The protein resides in the chloroplast thylakoid membrane. It catalyses the reaction reduced [plastocyanin] + hnu + oxidized [2Fe-2S]-[ferredoxin] = oxidized [plastocyanin] + reduced [2Fe-2S]-[ferredoxin]. Its function is as follows. PsaA and PsaB bind P700, the primary electron donor of photosystem I (PSI), as well as the electron acceptors A0, A1 and FX. PSI is a plastocyanin-ferredoxin oxidoreductase, converting photonic excitation into a charge separation, which transfers an electron from the donor P700 chlorophyll pair to the spectroscopically characterized acceptors A0, A1, FX, FA and FB in turn. Oxidized P700 is reduced on the lumenal side of the thylakoid membrane by plastocyanin. This is Photosystem I P700 chlorophyll a apoprotein A2 from Phaseolus vulgaris (Kidney bean).